A 230-amino-acid polypeptide reads, in one-letter code: N-(5'-phosphoribosyl)anthranilate isomerase (230 aa).

It belongs to the TrpF family.

The enzyme catalyses N-(5-phospho-beta-D-ribosyl)anthranilate = 1-(2-carboxyphenylamino)-1-deoxy-D-ribulose 5-phosphate. It participates in amino-acid biosynthesis; L-tryptophan biosynthesis; L-tryptophan from chorismate: step 3/5. In Syntrophus aciditrophicus (strain SB), this protein is N-(5'-phosphoribosyl)anthranilate isomerase.